Reading from the N-terminus, the 369-residue chain is Arsenite methyltransferase (369 aa).

Position 46 is a phosphoserine (Ser-46).

The protein belongs to the methyltransferase superfamily. Arsenite methyltransferase family.

The protein resides in the cytoplasm. It is found in the cytosol. The catalysed reaction is arsenic triglutathione + [thioredoxin]-dithiol + S-adenosyl-L-methionine + 2 H2O = methylarsonous acid + [thioredoxin]-disulfide + 3 glutathione + S-adenosyl-L-homocysteine + H(+). The enzyme catalyses arsenic triglutathione + 2 [thioredoxin]-dithiol + 2 S-adenosyl-L-methionine + H2O = dimethylarsinous acid + 2 [thioredoxin]-disulfide + 3 glutathione + 2 S-adenosyl-L-homocysteine + 2 H(+). It carries out the reaction arsenic triglutathione + 3 [thioredoxin]-dithiol + 3 S-adenosyl-L-methionine = trimethylarsine + 3 [thioredoxin]-disulfide + 3 glutathione + 3 S-adenosyl-L-homocysteine + 3 H(+). Functionally, catalyzes the transfer of a methyl group from AdoMet to trivalent arsenicals producing methylated and dimethylated arsenicals. It methylates arsenite to form methylarsonate, Me-AsO(3)H(2), which is reduced by methylarsonate reductase to methylarsonite, Me-As(OH)2. Methylarsonite is also a substrate and it is converted into the much less toxic compound dimethylarsinate (cacodylate), Me(2)As(O)-OH. In Rattus norvegicus (Rat), this protein is Arsenite methyltransferase (As3mt).